Consider the following 194-residue polypeptide: Ribonuclease HII (194 aa).

Positions 3 to 193 (ILTAGVDEAG…VRNLLAQQAL (191 aa)) constitute an RNase H type-2 domain. Residues D9, E10, and D101 each coordinate a divalent metal cation.

This sequence belongs to the RNase HII family. It depends on Mn(2+) as a cofactor. Requires Mg(2+) as cofactor.

The protein localises to the cytoplasm. The enzyme catalyses Endonucleolytic cleavage to 5'-phosphomonoester.. Functionally, endonuclease that specifically degrades the RNA of RNA-DNA hybrids. This is Ribonuclease HII from Neisseria gonorrhoeae (strain ATCC 700825 / FA 1090).